A 155-amino-acid polypeptide reads, in one-letter code: Small ribosomal subunit protein uS7 (155 aa).

Belongs to the universal ribosomal protein uS7 family. As to quaternary structure, part of the 30S ribosomal subunit. Contacts proteins S9 and S11.

One of the primary rRNA binding proteins, it binds directly to 16S rRNA where it nucleates assembly of the head domain of the 30S subunit. Is located at the subunit interface close to the decoding center, probably blocks exit of the E-site tRNA. The protein is Small ribosomal subunit protein uS7 of Thioalkalivibrio sulfidiphilus (strain HL-EbGR7).